The following is a 219-amino-acid chain: Ribosomal RNA small subunit methyltransferase G (219 aa).

S-adenosyl-L-methionine-binding positions include G85, L90, 136 to 137, and R151; that span reads VE.

The protein belongs to the methyltransferase superfamily. RNA methyltransferase RsmG family.

Its subcellular location is the cytoplasm. It catalyses the reaction guanosine(527) in 16S rRNA + S-adenosyl-L-methionine = N(7)-methylguanosine(527) in 16S rRNA + S-adenosyl-L-homocysteine. Its function is as follows. Specifically methylates the N7 position of guanine in position 527 of 16S rRNA. The sequence is that of Ribosomal RNA small subunit methyltransferase G from Cellvibrio japonicus (strain Ueda107) (Pseudomonas fluorescens subsp. cellulosa).